We begin with the raw amino-acid sequence, 359 residues long: 1-deoxy-D-xylulose 5-phosphate reductoisomerase (359 aa).

Positions 7, 8, 9, 10, 31, 32, 33, and 111 each coordinate NADPH. Lys-112 lines the 1-deoxy-D-xylulose 5-phosphate pocket. Position 113 (Glu-113) interacts with NADPH. Asp-131 provides a ligand contact to Mn(2+). Ser-132, Glu-133, Ser-155, and His-178 together coordinate 1-deoxy-D-xylulose 5-phosphate. Glu-133 contributes to the Mn(2+) binding site. Gly-184 contributes to the NADPH binding site. The 1-deoxy-D-xylulose 5-phosphate site is built by Ser-191, Asn-196, Lys-197, and Glu-200. Glu-200 contributes to the Mn(2+) binding site.

It belongs to the DXR family. It depends on Mg(2+) as a cofactor. Requires Mn(2+) as cofactor.

The enzyme catalyses 2-C-methyl-D-erythritol 4-phosphate + NADP(+) = 1-deoxy-D-xylulose 5-phosphate + NADPH + H(+). It participates in isoprenoid biosynthesis; isopentenyl diphosphate biosynthesis via DXP pathway; isopentenyl diphosphate from 1-deoxy-D-xylulose 5-phosphate: step 1/6. Its function is as follows. Catalyzes the NADPH-dependent rearrangement and reduction of 1-deoxy-D-xylulose-5-phosphate (DXP) to 2-C-methyl-D-erythritol 4-phosphate (MEP). This chain is 1-deoxy-D-xylulose 5-phosphate reductoisomerase, found in Campylobacter lari (strain RM2100 / D67 / ATCC BAA-1060).